Here is a 134-residue protein sequence, read N- to C-terminus: MSKPKHPRTLAETEAQALTRNIRVSPRKLNLVAGLIRNKPASQAVAILTFSKRRIAQDVRKTLESAIANAENNHQLDVDQLVVVRAEVGKSIVMRRFHARGRGRSSRIEKFFSHLKIVVAERAAEAETTEQKAA.

The protein belongs to the universal ribosomal protein uL22 family. Part of the 50S ribosomal subunit.

Its function is as follows. This protein binds specifically to 23S rRNA; its binding is stimulated by other ribosomal proteins, e.g. L4, L17, and L20. It is important during the early stages of 50S assembly. It makes multiple contacts with different domains of the 23S rRNA in the assembled 50S subunit and ribosome. Functionally, the globular domain of the protein is located near the polypeptide exit tunnel on the outside of the subunit, while an extended beta-hairpin is found that lines the wall of the exit tunnel in the center of the 70S ribosome. The sequence is that of Large ribosomal subunit protein uL22 from Gluconacetobacter diazotrophicus (strain ATCC 49037 / DSM 5601 / CCUG 37298 / CIP 103539 / LMG 7603 / PAl5).